We begin with the raw amino-acid sequence, 1031 residues long: Receptor-like protein EIX1 (1031 aa).

An N-terminal signal peptide occupies residues 1-29 (MDKWKYARLAQFLFTLSLLFLETSFGLGG). A glycan (N-linked (GlcNAc...) asparagine) is linked at Asn-30. The interval 30–113 (NKTLCLDKER…PRLTGKLSPS (84 aa)) is N-cap. Residues 30 to 971 (NKTLCLDKER…DEEEEFPSLE (942 aa)) are Extracellular-facing. An LRR 1 repeat occupies 117–140 (LEYLNYLDLSVNEFERSEIPRFIG). Residues 142 to 165 (LKRLEYLNLSASFFSGVIPIQFQN) form an LRR 2; degenerate repeat. Residues Asn-149 and Asn-165 are each glycosylated (N-linked (GlcNAc...) asparagine). LRR repeat units follow at residues 166–189 (LTSL…WLSH), 191–215 (SSLE…ITKV), 216–240 (PSLK…DLAN), and 243–266 (LISL…SWVF). N-linked (GlcNAc...) asparagine glycosylation is present at Asn-240. Asn-267 is a glycosylation site (N-linked (GlcNAc...) asparagine). LRR repeat units lie at residues 269–292 (TTSL…RFGT), 293–317 (LMYL…SFGN), 318–341 (LTRL…LFLR), 346–369 (RKSL…ATRF), 370–393 (SSLK…AGQV), 394–416 (STLE…LALF), 417–440 (PSLR…IGKL), 441–463 (SQLR…MGQL), 465–487 (NLES…HLSN), 488–509 (LSSL…SFNW), 512–536 (PFQL…LQNQ), 538–559 (NYTV…WFSS), 561–584 (PPDL…LIEN), and 586–611 (YGYR…NVQI). An N-linked (GlcNAc...) asparagine glycan is attached at Asn-317. N-linked (GlcNAc...) asparagine glycosylation is found at Asn-365 and Asn-383. Asn-487 carries an N-linked (GlcNAc...) asparagine glycan. Asn-538, Asn-568, and Asn-597 each carry an N-linked (GlcNAc...) asparagine glycan. Residues 612–629 (FYLHKNQFFGSISSICRS) form an LRR 21; degenerate repeat. LRR repeat units follow at residues 630 to 654 (RTSP…WMNM), 655 to 678 (TSLA…LGSL), 679 to 703 (TNLK…QCQG), 705 to 725 (QILD…IGTD), 726 to 750 (LLNL…ICQL), and 752 to 773 (FLQI…CFNN). N-linked (GlcNAc...) asparagine glycans are attached at residues Asn-653 and Asn-666. N-linked (GlcNAc...) asparagine glycosylation is found at Asn-773 and Asn-781. 4 LRR repeats span residues 823-847 (LLYL…IADM), 848-871 (RGLK…IGQM), 872-895 (RMLE…LANL), and 896-918 (TFLS…STQL). Residues Asn-854, Asn-861, and Asn-894 are each glycosylated (N-linked (GlcNAc...) asparagine). The tract at residues 919–971 (QSFDRSSYSDNAQLCGPPLQECPGYAPPSPLIDHGSNNNPQEHDEEEEFPSLE) is C-cap/acidic domain. The helical transmembrane segment at 972 to 992 (FYISMVLSFFVAFWGILGCLI) threads the bilayer. Topologically, residues 993–1031 (VNSSWRNAYFKFLTDTTSWLDMISRVWFARLKKKLRRAR) are cytoplasmic.

Belongs to the RLP family. Interacts with EIX elicitor protein.

It is found in the cell membrane. Functionally, involved in plant defense. Confers resistance to the fungal pathogen T.viride through recognition of the EIX elicitor protein. The chain is Receptor-like protein EIX1 from Solanum lycopersicum (Tomato).